We begin with the raw amino-acid sequence, 628 residues long: Beta-galactosidase large subunit (628 aa).

Glu-468 (proton donor) is an active-site residue. Glu-536 functions as the Nucleophile in the catalytic mechanism.

It belongs to the glycosyl hydrolase 2 family. Heterodimer of a large (LacL) and a small subunit (LacM).

The enzyme catalyses Hydrolysis of terminal non-reducing beta-D-galactose residues in beta-D-galactosides.. In terms of biological role, component of a beta-galactosidase. The sequence is that of Beta-galactosidase large subunit (lacL) from Lactobacillus acidophilus (strain ATCC 700396 / NCK56 / N2 / NCFM).